Consider the following 185-residue polypeptide: Adenylate kinase (185 aa).

Position 8–16 (Gly8–Thr16) interacts with ATP.

Belongs to the archaeal adenylate kinase family.

It is found in the cytoplasm. It carries out the reaction AMP + ATP = 2 ADP. The protein is Adenylate kinase (adkA) of Methanothermobacter thermautotrophicus (strain ATCC 29096 / DSM 1053 / JCM 10044 / NBRC 100330 / Delta H) (Methanobacterium thermoautotrophicum).